The following is a 363-amino-acid chain: Pyrimidine monooxygenase RutA (363 aa).

Residues I49 to K50, N115, E124, R140 to Y141, and S190 contribute to the FMN site.

Belongs to the NtaA/SnaA/DszA monooxygenase family. RutA subfamily.

The enzyme catalyses uracil + FMNH2 + NADH + O2 = (Z)-3-ureidoacrylate + FMN + NAD(+) + H2O + H(+). It catalyses the reaction thymine + FMNH2 + NADH + O2 = (Z)-2-methylureidoacrylate + FMN + NAD(+) + H2O + H(+). In terms of biological role, catalyzes the pyrimidine ring opening between N-3 and C-4 by an unusual flavin hydroperoxide-catalyzed mechanism, adding oxygen atoms in the process to yield ureidoacrylate peracid, that immediately reacts with FMN forming ureidoacrylate and FMN-N(5)-oxide. The FMN-N(5)-oxide reacts spontaneously with NADH to produce FMN. Requires the flavin reductase RutF to regenerate FMN in vivo. The chain is Pyrimidine monooxygenase RutA from Klebsiella variicola (strain At-22).